The chain runs to 283 residues: Zinc import ATP-binding protein ZnuC (283 aa).

The ABC transporter domain maps to 13–228 (VEMRNAGVHR…PEYVRLFGAR (216 aa)). An ATP-binding site is contributed by 45-52 (GPNGSGKS). The disordered stretch occupies residues 264–283 (HHHDHARDGGQGGGGHGHAG). Positions 272 to 283 (GGQGGGGHGHAG) are enriched in gly residues.

Belongs to the ABC transporter superfamily. Zinc importer (TC 3.A.1.15.5) family. As to quaternary structure, the complex is composed of two ATP-binding proteins (ZnuC), two transmembrane proteins (ZnuB) and a solute-binding protein (ZnuA).

Its subcellular location is the cell inner membrane. The catalysed reaction is Zn(2+)(out) + ATP(in) + H2O(in) = Zn(2+)(in) + ADP(in) + phosphate(in) + H(+)(in). Its function is as follows. Part of the ABC transporter complex ZnuABC involved in zinc import. Responsible for energy coupling to the transport system. The protein is Zinc import ATP-binding protein ZnuC of Chelativorans sp. (strain BNC1).